A 92-amino-acid polypeptide reads, in one-letter code: MKTLLLTLVVVTIVCLDLGYTRRCFTTPSVRSERCPPGQEVCYTKTWTDGHGGSRGKRVDLGCAATCPTPKKKDIKIICCSTDNCNTFPKWP.

The signal sequence occupies residues 1–21; sequence MKTLLLTLVVVTIVCLDLGYT. Disulfide bonds link C24-C42, C35-C63, C67-C79, and C80-C85.

Belongs to the three-finger toxin family. Long-chain subfamily. Type II alpha-neurotoxin sub-subfamily. As to expression, expressed by the venom gland.

It localises to the secreted. Binds with high affinity to muscular (alpha-1/CHRNA1) and neuronal (alpha-7/CHRNA7) nicotinic acetylcholine receptor (nAChR) and inhibits acetylcholine from binding to the receptor, thereby impairing neuromuscular and neuronal transmission. The sequence is that of Long neurotoxin 1 from Oxyuranus scutellatus scutellatus (Australian taipan).